Consider the following 156-residue polypeptide: Oxidized purine nucleoside triphosphate hydrolase (156 aa).

One can recognise a Nudix hydrolase domain in the interval T3 to R132. 2-oxo-dATP is bound at residue T8. O(6)-methyl-dGMP is bound by residues T8, K23, N33, and F35–K38. Residue K23 participates in 8-oxo-dGTP binding. Residues N33 and F35–K38 each bind 2-oxo-dATP. 5 residues coordinate Mg(2+): G36, E52, E55, E56, and E100. Residues G37–G58 carry the Nudix box motif. 2-oxo-dATP is bound at residue W117–D120. W117–D120 contributes to the O(6)-methyl-dGMP binding site.

The protein belongs to the Nudix hydrolase family. In terms of assembly, monomer. Mg(2+) serves as cofactor.

Its subcellular location is the cytoplasm. The protein resides in the cytosol. It localises to the mitochondrion matrix. It is found in the nucleus. The catalysed reaction is 2-oxo-dATP + H2O = 2-oxo-dAMP + diphosphate + H(+). It carries out the reaction 2-oxo-ATP + H2O = 2-oxo-AMP + diphosphate + H(+). It catalyses the reaction 8-oxo-dGTP + H2O = 8-oxo-dGMP + diphosphate + H(+). The enzyme catalyses 8-oxo-dATP + H2O = 8-oxo-dAMP + diphosphate + H(+). The catalysed reaction is O(6)-methyl-dGTP + H2O = O(6)-methyl-dGMP + diphosphate + H(+). It carries out the reaction N(6)-methyl-dATP + H2O = N(6)-methyl-dAMP + diphosphate + H(+). It catalyses the reaction N(6)-methyl-ATP + H2O = N(6)-methyl-AMP + diphosphate + H(+). With respect to regulation, inhibited by TH588. Its function is as follows. Oxidized purine nucleoside triphosphate hydrolase which is a prominent sanitizer of the oxidized nucleotide pool. Catalyzes the hydrolysis of 2-oxo-dATP (2-hydroxy-dATP) into 2-oxo-dAMP. Also has a significant hydrolase activity toward 2-oxo-ATP, 8-oxo-dGTP and 8-oxo-dATP. Through the hydrolysis of oxidized purine nucleoside triphosphates, prevents their incorporation into DNA and the subsequent transversions A:T to C:G and G:C to T:A. Also catalyzes the hydrolysis of methylated purine nucleoside triphosphate preventing their integration into DNA. Through this antimutagenic activity protects cells from oxidative stress. The chain is Oxidized purine nucleoside triphosphate hydrolase (nudt1) from Danio rerio (Zebrafish).